The sequence spans 159 residues: SsrA-binding protein (159 aa).

The protein belongs to the SmpB family.

The protein localises to the cytoplasm. In terms of biological role, required for rescue of stalled ribosomes mediated by trans-translation. Binds to transfer-messenger RNA (tmRNA), required for stable association of tmRNA with ribosomes. tmRNA and SmpB together mimic tRNA shape, replacing the anticodon stem-loop with SmpB. tmRNA is encoded by the ssrA gene; the 2 termini fold to resemble tRNA(Ala) and it encodes a 'tag peptide', a short internal open reading frame. During trans-translation Ala-aminoacylated tmRNA acts like a tRNA, entering the A-site of stalled ribosomes, displacing the stalled mRNA. The ribosome then switches to translate the ORF on the tmRNA; the nascent peptide is terminated with the 'tag peptide' encoded by the tmRNA and targeted for degradation. The ribosome is freed to recommence translation, which seems to be the essential function of trans-translation. In Actinobacillus pleuropneumoniae serotype 5b (strain L20), this protein is SsrA-binding protein.